A 62-amino-acid polypeptide reads, in one-letter code: Zinc finger-containing protein P28b (62 aa).

The RING-type; degenerate zinc-finger motif lies at 1–46 (MKLFTQNDRYFGLLDSCTHIFCITCINIWHKTRRETGASDNCPICR).

The protein is Zinc finger-containing protein P28b of Vaccinia virus (strain Western Reserve) (VACV).